The primary structure comprises 752 residues: Probable GTP-binding protein OBGC1, chloroplastic (752 aa).

Residues 1 to 90 (MAPAVAVVAA…RFPTANPEPR (90 aa)) constitute a chloroplast transit peptide. The segment at 19–121 (FSAEARRNTK…EEDEVELGLR (103 aa)) is disordered. Basic residues predominate over residues 26–36 (NTKGSRSKRGS). The segment covering 103-117 (GDDEEDEEEEEDEVE) has biased composition (acidic residues). The 159-residue stretch at 294–452 (MRCFDTAKIY…MWIDLELKLV (159 aa)) folds into the Obg domain. An OBG-type G domain is found at 453 to 621 (ADVGIVGAPN…VVLAAYKVLQ (169 aa)). GTP-binding positions include 459–466 (GAPNAGKS), 484–488 (FTTLL), 506–509 (DLPG), 573–576 (NKMD), and 602–604 (SAM). Residues Ser-466 and Thr-486 each contribute to the Mg(2+) site. The OCT domain occupies 649–728 (ERRAPMNEFE…VGEMEMVWTD (80 aa)). Positions 728–752 (DEPSKTRSSKTMNSKDDSVRWPEFG) are disordered. Basic and acidic residues predominate over residues 740–752 (NSKDDSVRWPEFG).

This sequence belongs to the TRAFAC class OBG-HflX-like GTPase superfamily. OBG GTPase family. Requires Mg(2+) as cofactor.

It localises to the plastid. It is found in the chloroplast. Its function is as follows. Probable GTP-binding protein that may play a role in chloroplast development. The chain is Probable GTP-binding protein OBGC1, chloroplastic (OBGC1) from Oryza sativa subsp. indica (Rice).